Consider the following 87-residue polypeptide: Cell division topological specificity factor (87 aa).

The protein belongs to the MinE family.

Functionally, prevents the cell division inhibition by proteins MinC and MinD at internal division sites while permitting inhibition at polar sites. This ensures cell division at the proper site by restricting the formation of a division septum at the midpoint of the long axis of the cell. This chain is Cell division topological specificity factor, found in Leptothrix cholodnii (strain ATCC 51168 / LMG 8142 / SP-6) (Leptothrix discophora (strain SP-6)).